Here is a 314-residue protein sequence, read N- to C-terminus: Malate dehydrogenase (314 aa).

NAD(+) contacts are provided by residues glycine 11–glycine 16 and aspartate 35. Substrate contacts are provided by arginine 84 and arginine 90. NAD(+) is bound by residues asparagine 97 and isoleucine 120–asparagine 122. Substrate-binding residues include asparagine 122 and arginine 153. Histidine 177 serves as the catalytic Proton acceptor.

The protein belongs to the LDH/MDH superfamily. MDH type 3 family.

The enzyme catalyses (S)-malate + NAD(+) = oxaloacetate + NADH + H(+). Catalyzes the reversible oxidation of malate to oxaloacetate. This chain is Malate dehydrogenase, found in Rickettsia rickettsii (strain Iowa).